A 473-amino-acid polypeptide reads, in one-letter code: Photosystem II CP43 reaction center protein (473 aa).

A propeptide spanning residues 1 to 14 is cleaved from the precursor; the sequence is MKILYSQRRFYHVE. Transmembrane regions (helical) follow at residues 69-93, 134-155, 178-200, 255-275, and 291-312; these read LFEVAHFLPEKPLYEQGCILLPHLA, LIGPEILEESYPFFGYDWRDKN, KAMFFGGVYDTWAPGGGDVRYIN, KPFGWARRAFVWSGEAYLSYS, and WYNNTAYPSEFYGPTGPEASQA. [CaMn4O5] cluster is bound at residue Glu367. Residues 447 to 471 form a helical membrane-spanning segment; it reads RARAAAAGFEKGINRENEPVLSMKL.

The protein belongs to the PsbB/PsbC family. PsbC subfamily. In terms of assembly, PSII is composed of 1 copy each of membrane proteins PsbA, PsbB, PsbC, PsbD, PsbE, PsbF, PsbH, PsbI, PsbJ, PsbK, PsbL, PsbM, PsbT, PsbY, PsbZ, Psb30/Ycf12, at least 3 peripheral proteins of the oxygen-evolving complex and a large number of cofactors. It forms dimeric complexes. Binds multiple chlorophylls and provides some of the ligands for the Ca-4Mn-5O cluster of the oxygen-evolving complex. It may also provide a ligand for a Cl- that is required for oxygen evolution. PSII binds additional chlorophylls, carotenoids and specific lipids. is required as a cofactor.

It is found in the plastid. Its subcellular location is the chloroplast thylakoid membrane. Its function is as follows. One of the components of the core complex of photosystem II (PSII). It binds chlorophyll and helps catalyze the primary light-induced photochemical processes of PSII. PSII is a light-driven water:plastoquinone oxidoreductase, using light energy to abstract electrons from H(2)O, generating O(2) and a proton gradient subsequently used for ATP formation. The chain is Photosystem II CP43 reaction center protein from Galdieria sulphuraria (Red alga).